A 58-amino-acid polypeptide reads, in one-letter code: Ribulose bisphosphate carboxylase large chain (58 aa).

Positions 1 to 2 (MS) are excised as a propeptide. Proline 3 bears the N-acetylproline mark. Lysine 14 is modified (N6,N6,N6-trimethyllysine).

It belongs to the RuBisCO large chain family. Type I subfamily. Heterohexadecamer of 8 large chains and 8 small chains.

The protein localises to the plastid. It is found in the chloroplast. The catalysed reaction is 2 (2R)-3-phosphoglycerate + 2 H(+) = D-ribulose 1,5-bisphosphate + CO2 + H2O. It catalyses the reaction D-ribulose 1,5-bisphosphate + O2 = 2-phosphoglycolate + (2R)-3-phosphoglycerate + 2 H(+). RuBisCO catalyzes two reactions: the carboxylation of D-ribulose 1,5-bisphosphate, the primary event in carbon dioxide fixation, as well as the oxidative fragmentation of the pentose substrate in the photorespiration process. Both reactions occur simultaneously and in competition at the same active site. The chain is Ribulose bisphosphate carboxylase large chain (rbcL) from Rosa damascena (Damask rose).